A 395-amino-acid chain; its full sequence is Putative phosphatidate cytidylyltransferase (395 aa).

The next 9 helical transmembrane spans lie at 13 to 33 (STVF…SAFA), 78 to 98 (FAFG…MNWE), 115 to 135 (SLLS…VIYF), 144 to 164 (WIWT…YMIS), 177 to 197 (IYSL…YFSV), 201 to 221 (WTTI…AYLF), 242 to 262 (AFFG…LYSI), 306 to 326 (FYIY…IFAI), and 358 to 378 (FDSS…AGIS).

Belongs to the CDS family.

The protein localises to the cell membrane. The enzyme catalyses a 1,2-diacyl-sn-glycero-3-phosphate + CTP + H(+) = a CDP-1,2-diacyl-sn-glycerol + diphosphate. Its pathway is phospholipid metabolism; CDP-diacylglycerol biosynthesis; CDP-diacylglycerol from sn-glycerol 3-phosphate: step 3/3. The sequence is that of Putative phosphatidate cytidylyltransferase (cdsA) from Mycoplasma pneumoniae (strain ATCC 29342 / M129 / Subtype 1) (Mycoplasmoides pneumoniae).